Reading from the N-terminus, the 294-residue chain is Ribosomal RNA small subunit methyltransferase A (294 aa).

The S-adenosyl-L-methionine site is built by Asn31, Leu33, Gly58, Glu79, Asp111, and Asn136.

Belongs to the class I-like SAM-binding methyltransferase superfamily. rRNA adenine N(6)-methyltransferase family. RsmA subfamily.

The protein localises to the cytoplasm. It carries out the reaction adenosine(1518)/adenosine(1519) in 16S rRNA + 4 S-adenosyl-L-methionine = N(6)-dimethyladenosine(1518)/N(6)-dimethyladenosine(1519) in 16S rRNA + 4 S-adenosyl-L-homocysteine + 4 H(+). In terms of biological role, specifically dimethylates two adjacent adenosines (A1518 and A1519) in the loop of a conserved hairpin near the 3'-end of 16S rRNA in the 30S particle. May play a critical role in biogenesis of 30S subunits. The chain is Ribosomal RNA small subunit methyltransferase A from Lactobacillus acidophilus (strain ATCC 700396 / NCK56 / N2 / NCFM).